We begin with the raw amino-acid sequence, 239 residues long: MGRAYQNRKESMAKTSDAKAKVYSKFSREIYVTAKSGGVEPESNLALQGLIERAKKAQVPAHVIDKALDKAKGGGGEDFAIARYEGYGPGNSMVIIECLTDNPNRTFGDVRSCFTKTKTKIGTQGSVSHMFDHAAILVFAGEDEEAVLEALLMADVDVSDIENEDGKISVFVPHTEYAKAKTALVDAFGAIDFEVDEIQFLPHMTKPIDNEEDRELFEKFLEMLDDLDDVQNVYYDVEL.

The protein belongs to the TACO1 family.

It is found in the cytoplasm. In Hydrogenovibrio crunogenus (strain DSM 25203 / XCL-2) (Thiomicrospira crunogena), this protein is Probable transcriptional regulatory protein Tcr_1104.